The primary structure comprises 1860 residues: Golgi-specific brefeldin A-resistance guanine nucleotide exchange factor 1 (1860 aa).

A DCB; DCB:DCB domain and DCB:HUS domain interaction region spans residues 1 to 211; the sequence is MVDKNIYIIQ…EPKNYVGTNM (211 aa). The interval 1–381 is interaction with RAB1B; sequence MVDKNIYIIQ…SVHDMDYVNP (381 aa). 2 disordered regions span residues 215-266 and 281-372; these read KMRA…GGMP and AASA…DSAS. The segment covering 227-241 has biased composition (basic residues); it reads WKKQKRSPRPPRHMT. Polar residues-rich tracts occupy residues 250 to 262, 290 to 301, and 335 to 351; these read PTPN…SNLT, TDSGLEFSSQTT, and DLQQ…SASV. A phosphoserine mark is found at Ser-350 and Ser-353. A Phosphothreonine modification is found at Thr-508. An HUS; DCB:HUS domain interaction region spans residues 531–551; the sequence is RIPSFVTELYINYDCDYYCSN. Residues 620 to 631 are compositionally biased toward basic and acidic residues; that stretch reads TREASNTERTAS. The segment at 620–666 is disordered; sequence TREASNTERTASDGKAVGMASDIPGLHLPGGGRLPPEHGKSGCSDLE. Ser-663 carries the post-translational modification Phosphoserine. Positions 693 to 883 constitute an SEC7 domain; the sequence is ELIEIKNKKK…EDMYHAIKNE (191 aa). The interval 887 to 1371 is phosphatidylinositol-phosphate binding; required for translocation to the leading edge and for ARF1 activation upon GPCR signaling; sequence MPEEQTGLVR…PSRPGPSPLI (485 aa). The span at 1285–1297 shows a compositional bias: low complexity; sequence QATARADAPDAGA. The tract at residues 1285–1336 is disordered; that stretch reads QATARADAPDAGAQSDSELPSYHQNDVSLDRGYTSDSEVYTDHGRPGKIHRS. A compositionally biased stretch (polar residues) spans 1298–1311; sequence QSDSELPSYHQNDV. Residue Ser-1299 is modified to Phosphoserine. Tyr-1317 carries the phosphotyrosine modification. A phosphoserine mark is found at Ser-1319, Ser-1321, and Ser-1336. Thr-1338 carries the phosphothreonine; by AMPK modification. Disordered stretches follow at residues 1351 to 1371, 1431 to 1484, and 1726 to 1809; these read GKDD…SPLI, CKSQ…DEGV, and PMPM…QPPL. Positions 1433-1447 are enriched in basic and acidic residues; the sequence is SQEKRGKSHKYDSKG. The segment covering 1465 to 1474 has biased composition (polar residues); that stretch reads TSSQHASRGG. Residues Ser-1476, Ser-1774, and Ser-1785 each carry the phosphoserine modification. Positions 1775–1792 are enriched in low complexity; the sequence is PRAASSSSPGSPVASSPS.

As to quaternary structure, can form homodimers and probably homotetramers. Interacts with COPG1; the interaction is independent of ARF1 activation. Interacts with ARF1, ARF3, ARF4 and ARF5. Interacts with RAB1B (GTP-bound form); required for GBF1 membrane association. Interacts with GGA1, GGA2 and GGA3. Interacts with USO1. Interacts (via SEC7 domain) with PNPLA2 (via C-terminus); the interaction is direct. Interacts with ARMH3. (Microbial infection) Interacts with poliovirus protein 3A. Post-translationally, AMPK-mediated phosphorylation at Thr-1338 is induced by 2-deoxyglucose (2-DG) and AICA ribonucleotide, and occurs during mitosis leading to membrane disassociation and inactivation of ARF1 during mitosis. In terms of tissue distribution, ubiquitous.

It localises to the golgi apparatus. The protein resides in the cis-Golgi network. Its subcellular location is the endoplasmic reticulum-Golgi intermediate compartment. It is found in the trans-Golgi network. The protein localises to the cytoplasm. It localises to the lipid droplet. The protein resides in the membrane. Inhibited by brefeldin A (BFA). Inhibited by golgicide A (GCA). Functionally, guanine-nucleotide exchange factor (GEF) for members of the Arf family of small GTPases involved in trafficking in the early secretory pathway; its GEF activity initiates the coating of nascent vesicles via the localized generation of activated ARFs through replacement of GDP with GTP. Recruitment to cis-Golgi membranes requires membrane association of Arf-GDP and can be regulated by ARF1, ARF3, ARF4 and ARF5. Involved in the recruitment of the COPI coat complex to the endoplasmic reticulum exit sites (ERES), and the endoplasmic reticulum-Golgi intermediate (ERGIC) and cis-Golgi compartments which implicates ARF1 activation. Involved in COPI vesicle-dependent retrograde transport from the ERGIC and cis-Golgi compartments to the endoplasmic reticulum (ER). Involved in the trans-Golgi network recruitment of GGA1, GGA2, GGA3, BIG1, BIG2, and the AP-1 adaptor protein complex related to chlathrin-dependent transport; the function requires its GEF activity (probably at least in part on ARF4 and ARF5). Has GEF activity towards ARF1. Has in vitro GEF activity towards ARF5. Involved in the processing of PSAP. Required for the assembly of the Golgi apparatus. The AMPK-phosphorylated form is involved in Golgi disassembly during mitotis and under stress conditions. May be involved in the COPI vesicle-dependent recruitment of PNPLA2 to lipid droplets; however, this function is under debate. In neutrophils, involved in G protein-coupled receptor (GPCR)-mediated chemotaxis und superoxide production. Proposed to be recruited by phosphatidylinositol-phosphates generated upon GPCR stimulation to the leading edge where it recruits and activates ARF1, and is involved in recruitment of GIT2 and the NADPH oxidase complex. Plays a role in maintaining mitochondrial morphology. The polypeptide is Golgi-specific brefeldin A-resistance guanine nucleotide exchange factor 1 (GBF1) (Homo sapiens (Human)).